We begin with the raw amino-acid sequence, 396 residues long: NADH-quinone oxidoreductase subunit D (396 aa).

This sequence belongs to the complex I 49 kDa subunit family. As to quaternary structure, NDH-1 is composed of 14 different subunits. Subunits NuoB, C, D, E, F, and G constitute the peripheral sector of the complex.

It localises to the cell inner membrane. It carries out the reaction a quinone + NADH + 5 H(+)(in) = a quinol + NAD(+) + 4 H(+)(out). Functionally, NDH-1 shuttles electrons from NADH, via FMN and iron-sulfur (Fe-S) centers, to quinones in the respiratory chain. The immediate electron acceptor for the enzyme in this species is believed to be ubiquinone. Couples the redox reaction to proton translocation (for every two electrons transferred, four hydrogen ions are translocated across the cytoplasmic membrane), and thus conserves the redox energy in a proton gradient. This is NADH-quinone oxidoreductase subunit D from Rhodopseudomonas palustris (strain BisB18).